The primary structure comprises 226 residues: Orotidine 5'-phosphate decarboxylase (226 aa).

Residues aspartate 8, lysine 30, 58–67, threonine 117, arginine 177, glutamine 186, glycine 206, and arginine 207 each bind substrate; that span reads DLKIHDIPNT. Lysine 60 acts as the Proton donor in catalysis.

The protein belongs to the OMP decarboxylase family. Type 1 subfamily. Homodimer.

It carries out the reaction orotidine 5'-phosphate + H(+) = UMP + CO2. Its pathway is pyrimidine metabolism; UMP biosynthesis via de novo pathway; UMP from orotate: step 2/2. Functionally, catalyzes the decarboxylation of orotidine 5'-monophosphate (OMP) to uridine 5'-monophosphate (UMP). This Campylobacter jejuni subsp. doylei (strain ATCC BAA-1458 / RM4099 / 269.97) protein is Orotidine 5'-phosphate decarboxylase.